The following is a 252-amino-acid chain: Imidazole glycerol phosphate synthase subunit HisF (252 aa).

Residues Asp11 and Asp130 contribute to the active site.

The protein belongs to the HisA/HisF family. As to quaternary structure, heterodimer of HisH and HisF.

Its subcellular location is the cytoplasm. It catalyses the reaction 5-[(5-phospho-1-deoxy-D-ribulos-1-ylimino)methylamino]-1-(5-phospho-beta-D-ribosyl)imidazole-4-carboxamide + L-glutamine = D-erythro-1-(imidazol-4-yl)glycerol 3-phosphate + 5-amino-1-(5-phospho-beta-D-ribosyl)imidazole-4-carboxamide + L-glutamate + H(+). It participates in amino-acid biosynthesis; L-histidine biosynthesis; L-histidine from 5-phospho-alpha-D-ribose 1-diphosphate: step 5/9. In terms of biological role, IGPS catalyzes the conversion of PRFAR and glutamine to IGP, AICAR and glutamate. The HisF subunit catalyzes the cyclization activity that produces IGP and AICAR from PRFAR using the ammonia provided by the HisH subunit. This Desulforudis audaxviator (strain MP104C) protein is Imidazole glycerol phosphate synthase subunit HisF.